The following is a 983-amino-acid chain: Receptor-type tyrosine-protein phosphatase-like N (983 aa).

The first 40 residues, 1 to 40, serve as a signal peptide directing secretion; that stretch reads MRRPRRPGGPAGCGGSEGSGGLRLLVCLLLLSGRPGGCSA. Residues 41–137 are RESP18 homology domain; it reads ISAHGCLFDR…HPRDRSGSVP (97 aa). The Lumenal portion of the chain corresponds to 41 to 579; it reads ISAHGCLFDR…RQAHGISPMR (539 aa). Cysteine 59 and cysteine 68 are disulfide-bonded. Residues 118–133 are compositionally biased toward basic and acidic residues; it reads RIPRLRPPEPHPRDRS. Disordered stretches follow at residues 118–179, 293–330, and 399–420; these read RIPR…SPLS, RARA…SPPQ, and GDTA…ASST. The span at 148–158 shows a compositional bias: polar residues; it reads SQGNPTGSSPA. The span at 307–326 shows a compositional bias: basic and acidic residues; it reads RAEDSSEGHEEEVLGGHGEK. Serine 311 and serine 312 each carry phosphoserine. The tract at residues 453–579 is sufficient for dimerization of proICA512; it reads SPLGQSQPTV…RQAHGISPMR (127 aa). Asparagine 510 and asparagine 528 each carry an N-linked (GlcNAc...) asparagine glycan. A helical transmembrane segment spans residues 580–604; that stretch reads SLLLTLVALAGVAGLLVALAVALCM. The tract at residues 605–736 is sufficient for dimerization of proICA512; the sequence is RHHSKQRDKE…PNTCATAQGE (132 aa). The Cytoplasmic portion of the chain corresponds to 605–983; that stretch reads RHHSKQRDKE…VNAILKALPQ (379 aa). The tract at residues 648–684 is disordered; that stretch reads RAEGQPEPSRVSSVSSQFSDAAQASPSSHSSTPSWCE. A compositionally biased stretch (low complexity) spans 652-681; the sequence is QPEPSRVSSVSSQFSDAAQASPSSHSSTPS. The 261-residue stretch at 713 to 973 folds into the Tyrosine-protein phosphatase domain; that stretch reads LAKEWQALCA…EFALTAVAEE (261 aa). Lysine 758 participates in a covalent cross-link: Glycyl lysine isopeptide (Lys-Gly) (interchain with G-Cter in SUMO).

The protein belongs to the protein-tyrosine phosphatase family. Receptor class 8 subfamily. In terms of assembly, homodimer; shown for the unprocessed protein (proICA512) in the endoplasmic reticulum and resolved during protein maturation as ICA512-TMF seems to be predominantly monomeric in secretory granules; however, ICA512-CCF interacts with ICA512-TMF disrupting the ICA512-TMF:SNTB2 complex. The isolated lumenal RESP18 homology domain has been shown to form disulfide-linked homooligomers. Interacts (via cytoplasmic domain) with phosphorylated SNTB2; this protects PTPRN against cleavage by CAPN1 to produce ICA512-CCF. Dephosphorylation of SNTB2 upon insulin stimulation disrupts the interaction and results in PTPRN cleavage. Interacts with SNX19. ICA512-CCF interacts with PIAS4; in the nucleus. Interacts with STAT5B (phosphorylated); down-regulated by ICA512-CCF sumoylation; ICA512-CCF prevents STAT5B dephosphorylation; ICA512-CCF mediates interaction of STAT5B with PIAS4. Interacts (via RESP18 homology domain) with insulin and proinsulin. Interacts with PTPRN2, PTPRA and PTPRE. In terms of processing, subject to proteolytic cleavage at multiple sites. Subject to cleavage on a pair of basic residues. Following exocytosis of secretory granules in pancreatic beta-cells ICA512-TMF located in the plasma-membrane is cleaved by mu-type calpain CPN1 to yield ICA512-CCF. Post-translationally, N-glycosylated. O-glycosylated. In terms of processing, sumoylated at two sites including Lys-758. Sumoylation decreases interaction with STAT5. As to expression, detected in pancreas islets. Detected in pancreas alpha, beta and delta cells, and in chromaffin cells in the adrenal medulla. Detected in amygdala, hypothalamus, autonomous nerve fibers and ganglia, especially at synaptic contacts. Detected in pituitary (at protein level). Detected in brain, specifically in cerebral cortex, diencephalon and brain stem.

The protein resides in the membrane. Its subcellular location is the cytoplasmic vesicle. It localises to the secretory vesicle membrane. It is found in the perikaryon. The protein localises to the cell projection. The protein resides in the axon. Its subcellular location is the synapse. It localises to the cell membrane. It is found in the endosome. The protein localises to the nucleus. Plays a role in vesicle-mediated secretory processes. Required for normal accumulation of secretory vesicles in hippocampus, pituitary and pancreatic islets. Required for the accumulation of normal levels of insulin-containing vesicles and preventing their degradation. Plays a role in insulin secretion in response to glucose stimuli. Required for normal accumulation of the neurotransmitters norepinephrine, dopamine and serotonin in the brain. In females, but not in males, required for normal accumulation and secretion of pituitary hormones, such as luteinizing hormone (LH) and follicle-stimulating hormone (FSH). Required to maintain normal levels of renin expression and renin release. Seems to lack intrinsic enzyme activity. In terms of biological role, ICA512-TMF regulates dynamics and exocytosis of insulin secretory granules (SGs); binding of ICA512-TMF to SNTB2/beta-2-syntrophin is proposed to restrain SGs mobility and exocytosis by tethering them to the actin cytoskeleton depending on UTRN; the function is inhibited by cytoplasmic ICA512-CFF dimerizing with ICA512-TMF and displacing SNTB2. Its function is as follows. ICA512-CCF translocated to the nucleus promotes expression of insulin and other granule-related genes; the function implicates binding to and regulating activity of STAT5B probably by preventing its dephosphorylation and potentially by inducing its sumoylation by recruiting PIAS4. Enhances pancreatic beta-cell proliferation by converging with signaling by STAT5B and STAT3. ICA512-CCF located in the cytoplasm regulates dynamics and exocytosis of insulin secretory granules (SGs) by dimerizing with ICA512-TMF and displacing SNTB2 thus enhancing SGs mobility and exocytosis. The chain is Receptor-type tyrosine-protein phosphatase-like N (Ptprn) from Rattus norvegicus (Rat).